The sequence spans 61 residues: Small ribosomal subunit protein uS14B (61 aa).

Zn(2+) contacts are provided by Cys-24, Cys-27, Cys-40, and Cys-43.

Belongs to the universal ribosomal protein uS14 family. Zinc-binding uS14 subfamily. Part of the 30S ribosomal subunit. Contacts proteins S3 and S10. Requires Zn(2+) as cofactor.

Its function is as follows. Binds 16S rRNA, required for the assembly of 30S particles and may also be responsible for determining the conformation of the 16S rRNA at the A site. In Staphylococcus saprophyticus subsp. saprophyticus (strain ATCC 15305 / DSM 20229 / NCIMB 8711 / NCTC 7292 / S-41), this protein is Small ribosomal subunit protein uS14B.